Reading from the N-terminus, the 449-residue chain is Probable glycosyltransferase 5 (449 aa).

Positions 1-14 are enriched in basic and acidic residues; it reads MMEKHGGKVTSDRR. The disordered stretch occupies residues 1–24; it reads MMEKHGGKVTSDRRAGRRQHGQRC. At 1–28 the chain is on the cytoplasmic side; the sequence is MMEKHGGKVTSDRRAGRRQHGQRCSASD. Residues 29-49 traverse the membrane as a helical; Signal-anchor for type II membrane protein segment; sequence AAPLVVVVILIVAALFLILGP. The Lumenal segment spans residues 50–449; the sequence is TGSSSFTVPR…HPTFRAARPT (400 aa). The segment at 74–109 is disordered; that stretch reads APPPPPPPAQMQAGANASSEEDSGLPPPRQLTDPPY. N-linked (GlcNAc...) asparagine glycosylation is found at Asn89, Asn413, and Asn422.

Belongs to the glycosyltransferase 34 family.

Its subcellular location is the golgi apparatus membrane. Its function is as follows. Probable glycosyltransferase that may be involved in the biosynthesis of xyloglucan. The polypeptide is Probable glycosyltransferase 5 (Oryza sativa subsp. japonica (Rice)).